A 637-amino-acid polypeptide reads, in one-letter code: CD2-associated protein (637 aa).

Positions 1–59 (MVDYIVEYDYDAVHDDELTIRVGEIIRNVKKLQEEGWLEGELNGRRGMFPDNFVKEIKR) constitute an SH3 1; truncated domain. The interval 1-175 (MVDYIVEYDY…ESTEDGETHN (175 aa)) is interaction with ANLN and localization to the midbody. Lys-58 is covalently cross-linked (Glycyl lysine isopeptide (Lys-Gly) (interchain with G-Cter in SUMO2)). A phosphoserine mark is found at Ser-80 and Ser-86. One can recognise an SH3 2 domain in the interval 108–167 (TKKRQCKVLFDYSPQNEDELELIVGDVIDVIEEVEEGWWSGTLNNKLGLFPSNFVKELES). Residues 166–177 (ESTEDGETHNAQ) are compositionally biased toward basic and acidic residues. The interval 166–209 (ESTEDGETHNAQEESEVPLTGPTSPLPSPGNGSEPAPGSVAQPK) is disordered. Ser-224 bears the Phosphoserine mark. Positions 226-254 (KLRTRTSSSETEEKKTEKPLILQPLGSRT) are disordered. The region spanning 269 to 330 (KAKEYCRTLF…PDNFAVQISE (62 aa)) is the SH3 3 domain. Residues 333-455 (KDFPKPKKPP…KLDPEQLPVR (123 aa)) are disordered. Short sequence motifs (SH3-binding) lie at residues 336–352 (PKPK…APKP), 378–397 (KPSK…APTK), and 410–422 (PKRP…PPPP). The span at 341-351 (PPPPAKGPAPK) shows a compositional bias: pro residues. Basic and acidic residues predominate over residues 356–379 (AAEKKAFPLKAEEKDEKSLLEQKP). Residues 437–449 (IDTEPVSKPKLDP) are compositionally biased toward basic and acidic residues. Ser-458, Ser-469, Ser-510, and Ser-514 each carry phosphoserine. The segment at 488–555 (HLTANRPKMP…SLSTPSSASK (68 aa)) is disordered. The segment covering 517–539 (KTLKLPKEDDSGNLKPLEFKKDA) has biased composition (basic and acidic residues). Lys-523 participates in a covalent cross-link: Glycyl lysine isopeptide (Lys-Gly) (interchain with G-Cter in SUMO2). The segment covering 540 to 555 (SYSSKSSLSTPSSASK) has biased composition (low complexity). Phosphothreonine is present on Thr-563. A coiled-coil region spans residues 578–636 (RNSVDELRAQIIELLCIVDALKKDHGKELEKLRKELEEEKAMRSNLEVEIAKLKKAVLL). Position 580 is a phosphoserine (Ser-580).

As to quaternary structure, homodimer. Interacts with F-actin, PKD2, NPHS1 and NPHS2. Interacts with WTIP. Interacts with DDN; interaction is direct. Interacts (via SH3 2 domain) with CBL (via phosphorylated C-terminus). Interacts with BCAR1/p130Cas (via SH3 domain). Interacts with MVB12A and ARHGAP17. Interacts with ANLN, CD2 and CBLB. Interacts with PDCD6IP and TSG101. Interacts with RIN3. Interacts directly with RET (inactive) and CBLC; upon RET activation by GDNF suggested to dissociate from RET as CBLC:CD2AP complex. Interacts with CGNL1 and SH3BP1; probably part of a complex at cell junctions. Interacts with CAPZA1. Phosphorylated on tyrosine residues; probably by c-Abl, Fyn and c-Src. Expressed in podocytes (at protein level).

It localises to the cytoplasm. It is found in the cytoskeleton. The protein resides in the cell projection. The protein localises to the ruffle. Its subcellular location is the cell junction. Seems to act as an adapter protein between membrane proteins and the actin cytoskeleton. In collaboration with CBLC, modulates the rate of RET turnover and may act as regulatory checkpoint that limits the potency of GDNF on neuronal survival. Controls CBLC function, converting it from an inhibitor to a promoter of RET degradation. May play a role in receptor clustering and cytoskeletal polarity in the junction between T-cell and antigen-presenting cell. May anchor the podocyte slit diaphragm to the actin cytoskeleton in renal glomerolus. Also required for cytokinesis. Plays a role in epithelial cell junctions formation. In Mus musculus (Mouse), this protein is CD2-associated protein (Cd2ap).